The following is a 345-amino-acid chain: NADH-ubiquinone oxidoreductase chain 2 (345 aa).

The next 9 membrane-spanning stretches (helical) occupy residues 25–45 (HWLL…PLMT), 60–80 (FLTQ…NAWL), 99–119 (TIAI…PEVL), 149–171 (LNTP…GGLN), 178–198 (ILAF…PFSP), 199–219 (QLMI…FLVL), 242–262 (ALSL…GFVP), 282–302 (LALS…IVTL), and 324–344 (LLLS…PLTL).

This sequence belongs to the complex I subunit 2 family. Core subunit of respiratory chain NADH dehydrogenase (Complex I) which is composed of 45 different subunits.

Its subcellular location is the mitochondrion inner membrane. The catalysed reaction is a ubiquinone + NADH + 5 H(+)(in) = a ubiquinol + NAD(+) + 4 H(+)(out). In terms of biological role, core subunit of the mitochondrial membrane respiratory chain NADH dehydrogenase (Complex I) which catalyzes electron transfer from NADH through the respiratory chain, using ubiquinone as an electron acceptor. Essential for the catalytic activity and assembly of complex I. The polypeptide is NADH-ubiquinone oxidoreductase chain 2 (mt-nd2) (Xenopus laevis (African clawed frog)).